A 421-amino-acid chain; its full sequence is CinA-like protein (421 aa).

Belongs to the CinA family.

This chain is CinA-like protein, found in Synechococcus sp. (strain ATCC 27144 / PCC 6301 / SAUG 1402/1) (Anacystis nidulans).